The chain runs to 314 residues: Methenyltetrahydromethanopterin cyclohydrolase (314 aa).

The protein belongs to the MCH family.

It localises to the cytoplasm. It catalyses the reaction 5,10-methenyl-5,6,7,8-tetrahydromethanopterin + H2O = N(5)-formyl-5,6,7,8-tetrahydromethanopterin + H(+). It participates in one-carbon metabolism; methanogenesis from CO(2); 5,10-methenyl-5,6,7,8-tetrahydromethanopterin from CO(2): step 3/3. In terms of biological role, catalyzes the reversible interconversion of 5-formyl-H(4)MPT to methenyl-H(4)MPT(+). This Methanoregula boonei (strain DSM 21154 / JCM 14090 / 6A8) protein is Methenyltetrahydromethanopterin cyclohydrolase.